The sequence spans 419 residues: Fumarylacetoacetase (419 aa).

N-acetylserine is present on Ser-2. A phosphoserine mark is found at Ser-84 and Ser-92. Residue Asp-126 coordinates Ca(2+). Tyr-128 lines the substrate pocket. The active-site Proton acceptor is the His-133. Residue Arg-142 coordinates substrate. Residues Glu-199, Glu-201, and Asp-233 each coordinate Ca(2+). Residue Asp-233 coordinates Mg(2+). The substrate site is built by Gln-240 and Tyr-244. Lys-253 and Thr-257 together coordinate Mg(2+). The residue at position 309 (Ser-309) is a Phosphoserine. A substrate-binding site is contributed by Thr-350. A Phosphoserine modification is found at Ser-417.

It belongs to the FAH family. Homodimer. Requires Ca(2+) as cofactor. The cofactor is Mg(2+). As to expression, mainly in liver and kidney.

The enzyme catalyses 4-fumarylacetoacetate + H2O = acetoacetate + fumarate + H(+). It functions in the pathway amino-acid degradation; L-phenylalanine degradation; acetoacetate and fumarate from L-phenylalanine: step 6/6. This is Fumarylacetoacetase (Fah) from Mus musculus (Mouse).